A 449-amino-acid polypeptide reads, in one-letter code: Maltose-6'-phosphate glucosidase (449 aa).

Residue 6–72 (FSIVIAGGGS…PDIEFAATTD (67 aa)) participates in NAD(+) binding. Positions 95 and 149 each coordinate substrate. Position 171 (C171) interacts with Mn(2+). The active-site Proton donor is the D172. H202 provides a ligand contact to Mn(2+). Y265 acts as the Proton acceptor in catalysis. R285 contacts substrate.

Belongs to the glycosyl hydrolase 4 family. Homotetramer. Requires Mn(2+) as cofactor. It depends on Fe(2+) as a cofactor. The cofactor is Co(2+). Ni(2+) serves as cofactor. NAD(+) is required as a cofactor.

The catalysed reaction is alpha-maltose 6'-phosphate + H2O = D-glucose 6-phosphate + D-glucose. With respect to regulation, cellobiose-6'-phosphate and 6-phospho-beta-D-glucopyranoside are not substrates but competitive inhibitors of GlvA. Its function is as follows. Hydrolyzes maltose-6'-phosphate and trehalose-6'-phosphate. Is involved in the catabolism of alpha-glycosides accumulated via a phosphoenolpyruvate-dependent maltose phosphotransferase system (PEP-PTS). Is also able to significantly catalyze the hydrolysis of both 6-phospho-alpha- and 6-phospho-beta-glucosides containing activated leaving groups such as p-nitrophenol and does so with retention and inversion, respectively, of the substrate anomeric configuration. This chain is Maltose-6'-phosphate glucosidase (glvA), found in Bacillus subtilis (strain 168).